Reading from the N-terminus, the 190-residue chain is Threonylcarbamoyl-AMP synthase (190 aa).

One can recognise a YrdC-like domain in the interval 7 to 190; sequence NFVLADIVRA…ALTGKRFRQG (184 aa).

It belongs to the SUA5 family. TsaC subfamily.

The protein localises to the cytoplasm. The enzyme catalyses L-threonine + hydrogencarbonate + ATP = L-threonylcarbamoyladenylate + diphosphate + H2O. Functionally, required for the formation of a threonylcarbamoyl group on adenosine at position 37 (t(6)A37) in tRNAs that read codons beginning with adenine. Catalyzes the conversion of L-threonine, HCO(3)(-)/CO(2) and ATP to give threonylcarbamoyl-AMP (TC-AMP) as the acyladenylate intermediate, with the release of diphosphate. The protein is Threonylcarbamoyl-AMP synthase of Yersinia pestis bv. Antiqua (strain Angola).